The primary structure comprises 372 residues: Queuine tRNA-ribosyltransferase (372 aa).

The active-site Proton acceptor is the Asp-89. Residues 89–93 (DSGGF), Asp-161, and Gly-232 contribute to the substrate site. Residues 262–268 (GIGDLPS) are RNA binding. Asp-281 functions as the Nucleophile in the catalytic mechanism. The tract at residues 286–290 (TKAAR) is RNA binding; important for wobble base 34 recognition. 4 residues coordinate Zn(2+): Cys-319, Cys-321, Cys-324, and His-351.

It belongs to the queuine tRNA-ribosyltransferase family. Homodimer. Within each dimer, one monomer is responsible for RNA recognition and catalysis, while the other monomer binds to the replacement base PreQ1. Zn(2+) is required as a cofactor.

It catalyses the reaction 7-aminomethyl-7-carbaguanine + guanosine(34) in tRNA = 7-aminomethyl-7-carbaguanosine(34) in tRNA + guanine. Its pathway is tRNA modification; tRNA-queuosine biosynthesis. Functionally, catalyzes the base-exchange of a guanine (G) residue with the queuine precursor 7-aminomethyl-7-deazaguanine (PreQ1) at position 34 (anticodon wobble position) in tRNAs with GU(N) anticodons (tRNA-Asp, -Asn, -His and -Tyr). Catalysis occurs through a double-displacement mechanism. The nucleophile active site attacks the C1' of nucleotide 34 to detach the guanine base from the RNA, forming a covalent enzyme-RNA intermediate. The proton acceptor active site deprotonates the incoming PreQ1, allowing a nucleophilic attack on the C1' of the ribose to form the product. After dissociation, two additional enzymatic reactions on the tRNA convert PreQ1 to queuine (Q), resulting in the hypermodified nucleoside queuosine (7-(((4,5-cis-dihydroxy-2-cyclopenten-1-yl)amino)methyl)-7-deazaguanosine). The protein is Queuine tRNA-ribosyltransferase of Chlamydia muridarum (strain MoPn / Nigg).